The sequence spans 1784 residues: Histone acetyltransferase KAT6B (1784 aa).

Residues methionine 1 to proline 77 form the SAMD1-like winged helix (WH) domain. Residues lysine 72–serine 98 form a disordered region. One can recognise an H15 domain in the interval arginine 103 to tyrosine 176. 2 consecutive PHD-type zinc fingers follow at residues isoleucine 213–cysteine 272 and cysteine 269–lysine 320. Serine 355 carries the post-translational modification Phosphoserine. The interval glycine 361–glycine 425 is negatively regulates HAT activity. A Glycyl lysine isopeptide (Lys-Gly) (interchain with G-Cter in SUMO2) cross-link involves residue lysine 381. Residues aspartate 423–proline 697 enclose the MYST-type HAT domain. Residues arginine 426–alanine 716 are catalytic. A C2HC MYST-type zinc finger spans residues leucine 456–tryptophan 481. Residues glutamate 460–alanine 716 are interaction with BRPF1. Residue lysine 523 is modified to N6-acetyllysine; by autocatalysis. Residues serine 564–isoleucine 568 and glutamine 573–arginine 579 each bind acetyl-CoA. The active-site Proton donor/acceptor is glutamate 599. An acetyl-CoA-binding site is contributed by serine 603. 4 disordered regions span residues glutamate 730 to proline 884, arginine 904 to valine 1163, serine 1195 to cysteine 1273, and glutamine 1291 to valine 1330. Over residues valine 733–asparagine 751 the composition is skewed to polar residues. Residues lysine 746, lysine 750, and lysine 752 each carry the N6-acetyllysine modification. Serine 756 is modified (phosphoserine). Acidic residues predominate over residues serine 777–asparagine 819. Residues isoleucine 820 to glutamine 831 are compositionally biased toward polar residues. A compositionally biased stretch (basic residues) spans isoleucine 835–isoleucine 854. Residues serine 856–valine 869 are compositionally biased toward low complexity. Basic residues predominate over residues arginine 904–lysine 914. 2 stretches are compositionally biased toward basic and acidic residues: residues methionine 938–lysine 957 and glutamate 1055–proline 1064. Positions glutamate 1065–glycine 1087 are enriched in acidic residues. 2 stretches are compositionally biased toward basic and acidic residues: residues asparagine 1088–lysine 1101 and serine 1107–aspartate 1118. Positions histidine 1119–glutamate 1128 are enriched in acidic residues. Over residues histidine 1144–valine 1163 the composition is skewed to basic and acidic residues. The segment covering alanine 1209–proline 1218 has biased composition (acidic residues). The span at glutamine 1224–glutamate 1240 shows a compositional bias: basic and acidic residues. 2 stretches are compositionally biased toward polar residues: residues glutamate 1251–serine 1263 and glutamine 1291–cysteine 1302. The interval glutamine 1271–arginine 1784 is interaction with RUNX1 and RUNX2. Residues serine 1305–valine 1322 show a composition bias toward low complexity.

It belongs to the MYST (SAS/MOZ) family. Component of the MOZ/MORF complex composed at least of ING5, KAT6A, KAT6B, MEAF6 and one of BRPF1, BRD1/BRPF2 and BRPF3. Interacts with RUNX1 and RUNX2. Autoacetylation at Lys-523 is required for proper function.

It localises to the nucleus. It carries out the reaction L-lysyl-[protein] + acetyl-CoA = N(6)-acetyl-L-lysyl-[protein] + CoA + H(+). Its function is as follows. Histone acetyltransferase which may be involved in both positive and negative regulation of transcription. Required for RUNX2-dependent transcriptional activation. May be involved in cerebral cortex development. Component of the MOZ/MORF complex which has a histone H3 acetyltransferase activity. This Macaca fascicularis (Crab-eating macaque) protein is Histone acetyltransferase KAT6B (KAT6B).